An 852-amino-acid chain; its full sequence is GPI ethanolamine phosphate transferase 2 (852 aa).

2 N-linked (GlcNAc...) asparagine glycosylation sites follow: asparagine 191 and asparagine 420. The next 3 helical transmembrane spans lie at 458–478, 486–506, and 516–536; these read LIRL…TFFP, FAPA…MMFA, and FWYW…AGHF. A glycan (N-linked (GlcNAc...) asparagine) is linked at asparagine 576. The next 6 helical transmembrane spans lie at 632 to 652, 676 to 696, 714 to 734, 750 to 770, 787 to 807, and 824 to 844; these read LLYH…YSLY, TLTL…FLVF, TITS…SNAI, SVFI…IWWV, AHVT…MAAC, and YLYT…LGEI.

Belongs to the PIGG/PIGN/PIGO family. PIGG subfamily.

The protein localises to the endoplasmic reticulum membrane. The protein operates within glycolipid biosynthesis; glycosylphosphatidylinositol-anchor biosynthesis. Its function is as follows. Ethanolamine phosphate transferase involved in glycosylphosphatidylinositol-anchor biosynthesis. Transfers ethanolamine phosphate to the GPI second mannose. The polypeptide is GPI ethanolamine phosphate transferase 2 (las21) (Aspergillus oryzae (strain ATCC 42149 / RIB 40) (Yellow koji mold)).